Here is a 730-residue protein sequence, read N- to C-terminus: MASGRGASSRWFFTREQLENTPSRRCGVEADKELSCRQQAANLIQEMGQRLNVSQLTINTAIVYMHRFYMHHSFTKFNKNIISSTALFLAAKVEEQARKLEHVIKVAHACLHPLEPLLDTKCDAYLQQTQELVILETIMLQTLGFEITIEHPHTDVVKCTQLVRASKDLAQTSYFMATNSLHLTTFCLQYKPTVIACVCIHLACKWSNWEIPVSTDGKHWWEYVDPTVTLELLDELTHEFLQILEKTPNRLKKIRNWRANQAARKPKVDGQVSETPLLGSSLVQNSILVDSVTGVPTNPSFQKPSTSAFPAPVPLNSGNISVQDSHTSDNLSMLATGMPSTSYGLSSHQEWPQHQDSARTEQLYSQKQETSLSGSQYNINFQQGPSISLHSGLHHRPDKISDHSSVKQEYTHKAGSSKHHGPISTTPGIIPQKMSLDKYREKRKLETLDLDVRDHYIAAQVEQQHKQGQSQAASSSSVTSPIKMKIPIANTEKYMADKKEKSGSLKLRIPIPPTDKSASKEELKMKIKVSSSERHSSSDEGSGKSKHSSPHISRDHKEKHKEHPSSRHHTSSHKHSHSHSGSSSGGSKHSADGIPPTVLRSPVGLSSDGISSSSSSSRKRLHVNDASHNHHSKMSKSSKSSGSSSSSSSSVKQYISSHNSVFNHPLPPPPPVTYQVGYGHLSTLVKLDKKPVETNGPDANHEYSTSSQHMDYKDTFDMLDSLLSAQGMNM.

The segment at 1–300 (MASGRGASSR…SVTGVPTNPS (300 aa)) is interaction with MDFIC and MDFI. Residues 12–147 (FFTREQLENT…IMLQTLGFEI (136 aa)) form the Cyclin N-terminal domain. An interaction with POLR2A region spans residues 250–300 (RLKKIRNWRANQAARKPKVDGQVSETPLLGSSLVQNSILVDSVTGVPTNPS). Polar residues-rich tracts occupy residues 341–350 (TSYGLSSHQE) and 360–389 (TEQL…SISL). The interval 341–430 (TSYGLSSHQE…GPISTTPGII (90 aa)) is disordered. The segment covering 398-412 (DKISDHSSVKQEYTH) has biased composition (basic and acidic residues). Residue Lys-407 forms a Glycyl lysine isopeptide (Lys-Gly) (interchain with G-Cter in SUMO2) linkage. At Ser-480 the chain carries Phosphoserine. The interval 497–652 (DKKEKSGSLK…SSSSSSSSVK (156 aa)) is disordered. 2 stretches are compositionally biased toward basic and acidic residues: residues 517–543 (SASK…EGSG) and 552–565 (ISRD…EHPS). The segment covering 566–578 (SRHHTSSHKHSHS) has biased composition (basic residues). Over residues 579 to 588 (HSGSSSGGSK) the composition is skewed to low complexity. Ser-601 carries the post-translational modification Phosphoserine. Low complexity-rich tracts occupy residues 606 to 616 (SSDGISSSSSS) and 637 to 652 (SSKS…SSVK).

It belongs to the cyclin family. Cyclin C subfamily. Interacts with CDK9 to form P-TEFb. Interacts with POLR2A (via the C-terminal domain (CTD)); mediates transcriptional activity. Interacts with HEXIM1; mediates formation of a tripartite complex with KPNA2. Interacts with HEXIM2. Interacts with PKN1; enhances MYOD1-dependent transcription. P-TEFB complex interacts with RB1; promotes phosphorylation of RB1. P-TEFB complex interacts with MYOD1; promotes the transcriptional activity of MYOD1 through its CDK9-mediated phosphorylation. Interacts with MDFI and MDFIC. Interacts with MON1B; down-regulates CCNT2-mediated activation of viral promoters during herpes simplex virus 1/HHV-1 infection. As to quaternary structure, (Microbial infection) Interacts with HIV-2 and SIV Tat. Does not bind efficiently to the transactivation domain of the HIV-1 Tat. Ubiquitously expressed.

The protein localises to the cytoplasm. It localises to the perinuclear region. Its subcellular location is the nucleus. Its function is as follows. Regulatory subunit of the cyclin-dependent kinase pair (CDK9/cyclin T) complex, also called positive transcription elongation factor B (P-TEFB), which is proposed to facilitate the transition from abortive to production elongation by phosphorylating the CTD (carboxy-terminal domain) of the large subunit of RNA polymerase II (RNAP II). The activity of this complex is regulated by binding with 7SK snRNA. Plays a role during muscle differentiation; P-TEFB complex interacts with MYOD1; this tripartite complex promotes the transcriptional activity of MYOD1 through its CDK9-mediated phosphorylation and binds the chromatin of promoters and enhancers of muscle-specific genes; this event correlates with hyperphosphorylation of the CTD domain of RNA pol II. In addition, enhances MYOD1-dependent transcription through interaction with PKN1. Involved in early embryo development. Functionally, (Microbial infection) Promotes transcriptional activation of early and late herpes simplex virus 1/HHV-1 promoters. This Homo sapiens (Human) protein is Cyclin-T2.